The following is a 567-amino-acid chain: Major facilitator superfamily transporter MG061 (567 aa).

Helical transmembrane passes span 15 to 35 (ITLW…WFVI), 78 to 98 (WTIT…VLKF), 104 to 124 (VLIM…GDPL), 193 to 213 (GYAL…TLVV), 230 to 250 (ILSN…FTPF), 264 to 284 (VYIM…FLWF), 321 to 341 (LIGV…PAWF), 363 to 383 (TGLA…FVVF), 405 to 425 (IVVL…SAAG), 426 to 446 (FALI…LSSS), 462 to 482 (LPIL…LFDI), and 503 to 523 (PGVI…NLIV).

This sequence belongs to the major facilitator superfamily.

It is found in the cell membrane. In Mycoplasma genitalium (strain ATCC 33530 / DSM 19775 / NCTC 10195 / G37) (Mycoplasmoides genitalium), this protein is Major facilitator superfamily transporter MG061.